The primary structure comprises 547 residues: MAAKEVLFGNDARVKMLAGVNILANAVKVTLGPKGRNVVLDKSFGAPLITKDGVSVAKEIELEDKFENMGAQMVKEVASKANDAAGDGTTTATVLAQAIVTEGLKAVAAGMNPMDLKRGIDKAVVAAVAELKNLSQECSDTKAIAQVGTISANSDESIGEIIATAMERVGKEGVITVEEGQALENELDVVEGMQFDRGYLSPYFINKPETGSVELESPFILLVDKKVSNIRELLPILEGLAKTGKPLLIVAEDVEGEALATLVVNNMRGIVKVAAVKAPGFGDRRKAMLQDIAILTGGTVIAEEIGLELEKATLEDLGTAKRVIITKDDTTIIDGNGEETQIKARVAQIKIQAEESTSDYDKEKLQERMAKLAGGVAVIKVGAATEVEMKEKKARVEDALHATRAAVEEGVVAGGGVALVRVASKIGELDVINEDQKHGVIIALRAMEAPLRQIAANAGEEGSVVANNVKNGTGNYGYNAGNDTYGDMLEMGILDPTKVTRSALQFASSIAGLMITTECMVAEVKEDAADMGGMGGMGGMGGMGGMM.

Residues 30–33 (TLGP), lysine 51, 87–91 (DGTTT), glycine 415, and aspartate 495 contribute to the ATP site.

It belongs to the chaperonin (HSP60) family. In terms of assembly, forms a cylinder of 14 subunits composed of two heptameric rings stacked back-to-back. Interacts with the co-chaperonin GroES.

It is found in the cytoplasm. It catalyses the reaction ATP + H2O + a folded polypeptide = ADP + phosphate + an unfolded polypeptide.. In terms of biological role, together with its co-chaperonin GroES, plays an essential role in assisting protein folding. The GroEL-GroES system forms a nano-cage that allows encapsulation of the non-native substrate proteins and provides a physical environment optimized to promote and accelerate protein folding. The chain is Chaperonin GroEL from Shewanella pealeana (strain ATCC 700345 / ANG-SQ1).